The following is a 220-amino-acid chain: Large ribosomal subunit protein uL3 (220 aa).

The tract at residues 132–153 (SGRASHGNSRSHNVPGSIGMAQ) is disordered. The span at 133–145 (GRASHGNSRSHNV) shows a compositional bias: polar residues. Gln153 carries the post-translational modification N5-methylglutamine.

It belongs to the universal ribosomal protein uL3 family. As to quaternary structure, part of the 50S ribosomal subunit. Forms a cluster with proteins L14 and L19. Methylated by PrmB.

Its function is as follows. One of the primary rRNA binding proteins, it binds directly near the 3'-end of the 23S rRNA, where it nucleates assembly of the 50S subunit. The polypeptide is Large ribosomal subunit protein uL3 (Ralstonia nicotianae (strain ATCC BAA-1114 / GMI1000) (Ralstonia solanacearum)).